The following is a 75-amino-acid chain: CDC42 small effector protein 1 (75 aa).

S-palmitoyl cysteine attachment occurs at residues Cys10 and Cys11. The CRIB domain occupies 30–43; that stretch reads IGEPTNFVHLTHIG. Residues 45–75 form a disordered region; the sequence is GEMADGMQPSGPIKEQMRSKVPHANGRNSLL.

It belongs to the CDC42SE/SPEC family.

The protein resides in the cytoplasm. The protein localises to the cytoskeleton. It is found in the cell membrane. Its function is as follows. Probably involved in the organization of the actin cytoskeleton by acting downstream of CDC42, inducing actin filament assembly. The polypeptide is CDC42 small effector protein 1 (cdc42se1) (Danio rerio (Zebrafish)).